The primary structure comprises 368 residues: Phosphate acyltransferase (368 aa).

Residues 334–368 are disordered; sequence AAPLGESGRDANGAGQASPSAGQPAEPSAALSSKT.

This sequence belongs to the PlsX family. As to quaternary structure, homodimer. Probably interacts with PlsY.

It is found in the cytoplasm. The catalysed reaction is a fatty acyl-[ACP] + phosphate = an acyl phosphate + holo-[ACP]. The protein operates within lipid metabolism; phospholipid metabolism. Functionally, catalyzes the reversible formation of acyl-phosphate (acyl-PO(4)) from acyl-[acyl-carrier-protein] (acyl-ACP). This enzyme utilizes acyl-ACP as fatty acyl donor, but not acyl-CoA. This is Phosphate acyltransferase from Burkholderia pseudomallei (strain 1106a).